The following is an 88-amino-acid chain: DNA-directed RNA polymerase subunit omega (88 aa).

This sequence belongs to the RNA polymerase subunit omega family. As to quaternary structure, the RNAP catalytic core consists of 2 alpha, 1 beta, 1 beta' and 1 omega subunit. When a sigma factor is associated with the core the holoenzyme is formed, which can initiate transcription.

It carries out the reaction RNA(n) + a ribonucleoside 5'-triphosphate = RNA(n+1) + diphosphate. Functionally, promotes RNA polymerase assembly. Latches the N- and C-terminal regions of the beta' subunit thereby facilitating its interaction with the beta and alpha subunits. This Pseudomonas aeruginosa (strain LESB58) protein is DNA-directed RNA polymerase subunit omega.